Here is a 450-residue protein sequence, read N- to C-terminus: MPDVPETVGTPDGSTEFEHRPTTDQSFENALAKARNGTRLTVDDAVELFTTGTDRDGIDHDRKEQVLEAADRRRAEVVGDEVTFVANLNNNVTTACNTGCLFCNFKDRSEQFRSDYQEDHGGFTKTPSESRQIVQDALDRGIYEVCSVSGLHPALALDTEHREILETSDRGDLNYRSPDEYETDPATYCEQLDAMNVGDIHLHSMTPEEAYHARRGTDWSYEEVFSRLQDAGLDSVPGTAAEILVDEVRDVICPGKIRTDEWLEAMAAAASVGLDMTSTMMYGHVENEYHRALHLQRIRDLQDRTGAITEFVPLSFVHEETPLYERGMVDGGATVDEDELMIAVSRLFLDNVDHIQASWVKYGDTQGLKMLTCGADDFMGTILSEEITKRAGGDYGEFRSFQEYADMITAIGRTPVERSTDYEQRRVIDPDADVLGPQLGPRADGTPLLD.

The segment at 1–24 (MPDVPETVGTPDGSTEFEHRPTTD) is disordered. In terms of domain architecture, Radical SAM core spans 82-350 (VTFVANLNNN…MIAVSRLFLD (269 aa)). 3 residues coordinate [4Fe-4S] cluster: cysteine 96, cysteine 100, and cysteine 103. The tract at residues 430–450 (PDADVLGPQLGPRADGTPLLD) is disordered.

The protein belongs to the radical SAM superfamily. CofH family. As to quaternary structure, consists of two subunits, CofG and CofH. The cofactor is [4Fe-4S] cluster.

The catalysed reaction is 5-amino-6-(D-ribitylamino)uracil + L-tyrosine + S-adenosyl-L-methionine = 5-amino-5-(4-hydroxybenzyl)-6-(D-ribitylimino)-5,6-dihydrouracil + 2-iminoacetate + 5'-deoxyadenosine + L-methionine + H(+). The protein operates within cofactor biosynthesis; coenzyme F0 biosynthesis. Functionally, catalyzes the radical-mediated synthesis of 5-amino-5-(4-hydroxybenzyl)-6-(D-ribitylimino)-5,6-dihydrouracil from 5-amino-6-(D-ribitylamino)uracil and L-tyrosine. The sequence is that of 5-amino-6-(D-ribitylamino)uracil--L-tyrosine 4-hydroxyphenyl transferase from Haloarcula marismortui (strain ATCC 43049 / DSM 3752 / JCM 8966 / VKM B-1809) (Halobacterium marismortui).